The following is an 84-amino-acid chain: Control protein C.SmaI (84 aa).

The region spanning 19-73 (VRSYRNINNLSQEQLAEISGLHRTYIGSVERKERNVTLSTLIILAKALNTSVPKL) is the HTH cro/C1-type domain. The H-T-H motif DNA-binding region spans 30–49 (QEQLAEISGLHRTYIGSVER).

Functionally, may control expression of its associated restriction-modification system SmaI. The protein is Control protein C.SmaI of Serratia marcescens.